Reading from the N-terminus, the 121-residue chain is Large ribosomal subunit protein bL20 (121 aa).

Belongs to the bacterial ribosomal protein bL20 family.

Functionally, binds directly to 23S ribosomal RNA and is necessary for the in vitro assembly process of the 50S ribosomal subunit. It is not involved in the protein synthesizing functions of that subunit. In Orientia tsutsugamushi (strain Boryong) (Rickettsia tsutsugamushi), this protein is Large ribosomal subunit protein bL20.